A 253-amino-acid chain; its full sequence is Transcription factor ORG2 (253 aa).

The 53-residue stretch at valine 71 to leucine 123 folds into the bHLH domain.

In terms of assembly, homodimer. Roots.

It localises to the nucleus. The protein is Transcription factor ORG2 (ORG2) of Arabidopsis thaliana (Mouse-ear cress).